A 392-amino-acid chain; its full sequence is 8-amino-7-oxononanoate synthase 1 (392 aa).

Residue 109-110 (GF) coordinates pyridoxal 5'-phosphate. His134 lines the substrate pocket. Pyridoxal 5'-phosphate is bound by residues Ser181, 206–209 (DDAH), and 237–240 (TLSK). At Lys240 the chain carries N6-(pyridoxal phosphate)lysine. Thr354 provides a ligand contact to substrate.

Belongs to the class-II pyridoxal-phosphate-dependent aminotransferase family. BioF subfamily. Homodimer. The cofactor is pyridoxal 5'-phosphate.

It carries out the reaction 6-carboxyhexanoyl-[ACP] + L-alanine + H(+) = (8S)-8-amino-7-oxononanoate + holo-[ACP] + CO2. It participates in cofactor biosynthesis; biotin biosynthesis. Catalyzes the decarboxylative condensation of pimeloyl-[acyl-carrier protein] and L-alanine to produce 8-amino-7-oxononanoate (AON), [acyl-carrier protein], and carbon dioxide. The polypeptide is 8-amino-7-oxononanoate synthase 1 (kbl) (Bacillus subtilis (strain 168)).